A 187-amino-acid chain; its full sequence is Ribulose bisphosphate carboxylase small subunit, chloroplastic (187 aa).

The transit peptide at 1–56 directs the protein to the chloroplast; it reads MASSVMSTATVATGANAAQASMIASFNGLKSAASFPVTRKQDLDITSIASNGGRVE.

This sequence belongs to the RuBisCO small chain family. As to quaternary structure, heterohexadecamer of 8 large and 8 small subunits.

It is found in the plastid. Its subcellular location is the chloroplast. Functionally, ruBisCO catalyzes two reactions: the carboxylation of D-ribulose 1,5-bisphosphate, the primary event in carbon dioxide fixation, as well as the oxidative fragmentation of the pentose substrate. Both reactions occur simultaneously and in competition at the same active site. Although the small subunit is not catalytic it is essential for maximal activity. This Capsicum annuum (Capsicum pepper) protein is Ribulose bisphosphate carboxylase small subunit, chloroplastic.